A 210-amino-acid polypeptide reads, in one-letter code: Helix-loop-helix protein 26 (210 aa).

The segment covering 1 to 15 has biased composition (low complexity); it reads MSSSPTSSSSGSPSS. Residues 1-33 are disordered; the sequence is MSSSPTSSSSGSPSSHGHRSETEKQRRDDTNDL. One can recognise a bHLH domain in the interval 14–65; it reads SSHGHRSETEKQRRDDTNDLLNEFKKIVQKSESEKLSKEEVLFRIVKLLSGI. Over residues 18 to 33 the composition is skewed to basic and acidic residues; sequence HRSETEKQRRDDTNDL.

Homodimer; binds to DNA as a homodimer. Expressed in intestinal cells (at protein level).

Its subcellular location is the nucleus. Functionally, as a homodimer binds DNA via the E-box sequence 5'-CACGTG-3'. Represses lag-2 transcription during embryogenesis via Notch signaling, in an unc-37-dependent manner. Also represses tbx-37 independent of Notch signaling. In the intestine, plays a role in probiotic-mediated protection against infections by pathogens such as S.enterica. This is most likely by positively regulating the expression of genes such as bar-1 upon exposure to probiotic bacteria such as the E.faecium. This is Helix-loop-helix protein 26 from Caenorhabditis elegans.